The sequence spans 785 residues: Phenylalanine--tRNA ligase beta subunit (785 aa).

The region spanning 39 to 147 (FPIPRGVVFA…DALPPGTPLS (109 aa)) is the tRNA-binding domain. In terms of domain architecture, B5 spans 399-474 (KPPEAIPFRP…RIQGYETIPL (76 aa)). D452, D458, E461, and E462 together coordinate Mg(2+). The region spanning 688–780 (SRHPAAFRDL…ALRARGFGLR (93 aa)) is the FDX-ACB domain.

Belongs to the phenylalanyl-tRNA synthetase beta subunit family. Type 1 subfamily. In terms of assembly, tetramer of two alpha and two beta subunits. Mg(2+) is required as a cofactor.

The protein resides in the cytoplasm. The enzyme catalyses tRNA(Phe) + L-phenylalanine + ATP = L-phenylalanyl-tRNA(Phe) + AMP + diphosphate + H(+). This is Phenylalanine--tRNA ligase beta subunit (pheT) from Thermus thermophilus (strain ATCC 27634 / DSM 579 / HB8).